The sequence spans 381 residues: Chitin deacetylase 8 (381 aa).

A signal peptide spans 1–18 (MKRLSVLCSLLLVAAALG). Cystine bridges form between cysteine 27/cysteine 39 and cysteine 32/cysteine 37. Zn(2+)-binding residues include aspartate 63, histidine 117, and histidine 121. Intrachain disulfides connect cysteine 86–cysteine 335, cysteine 211–cysteine 216, cysteine 240–cysteine 246, cysteine 343–cysteine 365, and cysteine 348–cysteine 368. Asparagine 171 carries an N-linked (GlcNAc...) asparagine glycan.

The protein belongs to the carbohydrate esterase 4 (CE4) family. The cofactor is Zn(2+). As to expression, strongly expressed in the midgut. Has little or no expression in other tissues tested.

The protein localises to the secreted. The enzyme catalyses [(1-&gt;4)-N-acetyl-beta-D-glucosaminyl](n) + n H2O = chitosan + n acetate. In terms of biological role, hydrolyzes the N-acetamido groups of N-acetyl-D-glucosamine (GlcNAc) residues in chitin. Shows activity towards the chitinous oligomers GlcNAc(3), GlcNAc(4), GlcNAc(5) and GlcNAc(6), but not GlcNAc or GlcNAc(2). Requires the substrate to occupy subsites 0, +1, and +2 for optimum catalysis. The polypeptide is Chitin deacetylase 8 (Bombyx mori (Silk moth)).